The following is a 226-amino-acid chain: Uracil-DNA glycosylase (226 aa).

The active-site Proton acceptor is the D64.

The protein belongs to the uracil-DNA glycosylase (UDG) superfamily. UNG family.

The protein resides in the cytoplasm. It catalyses the reaction Hydrolyzes single-stranded DNA or mismatched double-stranded DNA and polynucleotides, releasing free uracil.. Its function is as follows. Excises uracil residues from the DNA which can arise as a result of misincorporation of dUMP residues by DNA polymerase or due to deamination of cytosine. This chain is Uracil-DNA glycosylase, found in Fusobacterium nucleatum subsp. nucleatum (strain ATCC 25586 / DSM 15643 / BCRC 10681 / CIP 101130 / JCM 8532 / KCTC 2640 / LMG 13131 / VPI 4355).